A 363-amino-acid polypeptide reads, in one-letter code: MNEKLSTPSNITIERKLNHVEICLHGNVSFEGTTTGLERYAIEHQAVPEINYADINLSATLLGRTIGAPLMISSMTGGYHEAATLNRQFAQAAEHFRIPLGVGSMRQALENNEHRESFAVVRKAAPSVPVFANIGAPEVAAGLESSQIETMLDLIQADGLIVHLNAAQELFQPEGNTNFHGFLDQLASLTAKTPVPVIAKEVGSGISAEAARLLIDAGVKVIDVAGAGGTSWQKVEEVRYIKRFGNENRFSPEALNELLNWGIPTATCLEEIGRLKKNHPQYQPIEIIASGGIQSGIDVAKTILLGASVAASAGRLLKALHEGKLLQTIEMWLNDLKAVMFLTGSLSLEQLQKKRMTLKHLPT.

15–16 (RK) serves as a coordination point for substrate. FMN contacts are provided by residues serine 73, 74–76 (SMT), serine 104, and asparagine 133. 104–106 (SMR) is a binding site for substrate. Glutamine 168 is a binding site for substrate. Glutamate 169 is a Mg(2+) binding site. Residues lysine 200, threonine 230, and 313 to 314 (AG) contribute to the FMN site.

The protein belongs to the IPP isomerase type 2 family. In terms of assembly, homooctamer. Dimer of tetramers. Requires FMN as cofactor. The cofactor is NADPH. It depends on Mg(2+) as a cofactor.

The protein localises to the cytoplasm. It carries out the reaction isopentenyl diphosphate = dimethylallyl diphosphate. Involved in the biosynthesis of isoprenoids. Catalyzes the 1,3-allylic rearrangement of the homoallylic substrate isopentenyl (IPP) to its allylic isomer, dimethylallyl diphosphate (DMAPP). The protein is Isopentenyl-diphosphate delta-isomerase of Chlorobium phaeobacteroides (strain DSM 266 / SMG 266 / 2430).